An 82-amino-acid polypeptide reads, in one-letter code: Cytochrome c oxidase subunit NDUFA4 (82 aa).

Residues 1 to 14 (MLRQILGQAKKHPS) are Mitochondrial matrix-facing. The residue at position 10 (Lys-10) is an N6-acetyllysine. Residues 15–37 (LIPLFVFIGAGGTGAALYVMRLA) form a helical membrane-spanning segment. Topologically, residues 38–82 (LFNPDVSWDRKNNPEPWNKLGPNEQYKFYSVNVDYSKLKKEGPDF) are mitochondrial intermembrane. Ser-67 is subject to Phosphoserine.

Belongs to the complex IV NDUFA4 subunit family. In terms of assembly, component of the cytochrome c oxidase (complex IV, CIV), a multisubunit enzyme composed of 14 subunits. The complex is composed of a catalytic core of 3 subunits MT-CO1, MT-CO2 and MT-CO3, encoded in the mitochondrial DNA, and 11 supernumerary subunits COX4I, COX5A, COX5B, COX6A, COX6B, COX6C, COX7A, COX7B, COX7C, COX8 and NDUFA4, which are encoded in the nuclear genome. The complex exists as a monomer or a dimer and forms supercomplexes (SCs) in the inner mitochondrial membrane with NADH-ubiquinone oxidoreductase (complex I, CI) and ubiquinol-cytochrome c oxidoreductase (cytochrome b-c1 complex, complex III, CIII), resulting in different assemblies (supercomplex SCI(1)III(2)IV(1) and megacomplex MCI(2)III(2)IV(2)). Interacts with RAB5IF. Interacts with FLVCR2; this interaction occurs in the absence of heme and is disrupted upon heme binding.

The protein resides in the mitochondrion inner membrane. Component of the cytochrome c oxidase, the last enzyme in the mitochondrial electron transport chain which drives oxidative phosphorylation. The respiratory chain contains 3 multisubunit complexes succinate dehydrogenase (complex II, CII), ubiquinol-cytochrome c oxidoreductase (cytochrome b-c1 complex, complex III, CIII) and cytochrome c oxidase (complex IV, CIV), that cooperate to transfer electrons derived from NADH and succinate to molecular oxygen, creating an electrochemical gradient over the inner membrane that drives transmembrane transport and the ATP synthase. Cytochrome c oxidase is the component of the respiratory chain that catalyzes the reduction of oxygen to water. Electrons originating from reduced cytochrome c in the intermembrane space (IMS) are transferred via the dinuclear copper A center (CU(A)) of subunit 2 and heme A of subunit 1 to the active site in subunit 1, a binuclear center (BNC) formed by heme A3 and copper B (CU(B)). The BNC reduces molecular oxygen to 2 water molecules unsing 4 electrons from cytochrome c in the IMS and 4 protons from the mitochondrial matrix. NDUFA4 is required for complex IV maintenance. This Mus musculus (Mouse) protein is Cytochrome c oxidase subunit NDUFA4 (Ndufa4).